The primary structure comprises 35 residues: uncharacterized protein (35 aa).

The helical transmembrane segment at 14 to 34 (LAHLIGIIYLIIILGTLVMLF) threads the bilayer.

It is found in the endoplasmic reticulum membrane. This is an uncharacterized protein from Saccharomyces cerevisiae (strain ATCC 204508 / S288c) (Baker's yeast).